Reading from the N-terminus, the 138-residue chain is Large ribosomal subunit protein uL16 (138 aa).

A compositionally biased stretch (basic residues) spans 1–14; sequence MLQPKRTKYRRTHR. Residues 1–24 form a disordered region; that stretch reads MLQPKRTKYRRTHRLQHDKGEAHT. Basic and acidic residues predominate over residues 15-24; sequence LQHDKGEAHT.

Belongs to the universal ribosomal protein uL16 family. Part of the 50S ribosomal subunit.

Functionally, binds 23S rRNA and is also seen to make contacts with the A and possibly P site tRNAs. The polypeptide is Large ribosomal subunit protein uL16 (Mycoplasma mobile (strain ATCC 43663 / 163K / NCTC 11711) (Mesomycoplasma mobile)).